Reading from the N-terminus, the 247-residue chain is Probable transcriptional regulatory protein LBF_0056 (247 aa).

This sequence belongs to the TACO1 family.

The protein resides in the cytoplasm. In Leptospira biflexa serovar Patoc (strain Patoc 1 / Ames), this protein is Probable transcriptional regulatory protein LBF_0056.